Here is an 865-residue protein sequence, read N- to C-terminus: Leucine--tRNA ligase (865 aa).

The 'HIGH' region motif lies at 44–54 (PYPSGRIHVGH). The 'KMSKS' region motif lies at 625–629 (KMSKS). K628 lines the ATP pocket.

It belongs to the class-I aminoacyl-tRNA synthetase family.

The protein localises to the cytoplasm. The catalysed reaction is tRNA(Leu) + L-leucine + ATP = L-leucyl-tRNA(Leu) + AMP + diphosphate. The polypeptide is Leucine--tRNA ligase (Maricaulis maris (strain MCS10) (Caulobacter maris)).